A 155-amino-acid chain; its full sequence is D-aminoacyl-tRNA deacylase (155 aa).

The Gly-cisPro motif, important for rejection of L-amino acids signature appears at 137 to 138 (GP).

Belongs to the DTD family. As to quaternary structure, homodimer.

The protein localises to the cytoplasm. It carries out the reaction glycyl-tRNA(Ala) + H2O = tRNA(Ala) + glycine + H(+). The catalysed reaction is a D-aminoacyl-tRNA + H2O = a tRNA + a D-alpha-amino acid + H(+). In terms of biological role, an aminoacyl-tRNA editing enzyme that deacylates mischarged D-aminoacyl-tRNAs. Also deacylates mischarged glycyl-tRNA(Ala), protecting cells against glycine mischarging by AlaRS. Acts via tRNA-based rather than protein-based catalysis; rejects L-amino acids rather than detecting D-amino acids in the active site. By recycling D-aminoacyl-tRNA to D-amino acids and free tRNA molecules, this enzyme counteracts the toxicity associated with the formation of D-aminoacyl-tRNA entities in vivo and helps enforce protein L-homochirality. The protein is D-aminoacyl-tRNA deacylase of Paracidovorax citrulli (strain AAC00-1) (Acidovorax citrulli).